A 112-amino-acid chain; its full sequence is uncharacterized protein (112 aa).

The protein to Buchnera BUsg564.

This is an uncharacterized protein from Buchnera aphidicola subsp. Acyrthosiphon pisum (strain APS) (Acyrthosiphon pisum symbiotic bacterium).